Here is a 65-residue protein sequence, read N- to C-terminus: MPGVRIRENEPFDLALKKFKKQCEKAGILSEVRKREHYEKPSIKRKKKAIAARKRALKKQRKMMD.

This sequence belongs to the bacterial ribosomal protein bS21 family.

The sequence is that of Small ribosomal subunit protein bS21 from Trichlorobacter lovleyi (strain ATCC BAA-1151 / DSM 17278 / SZ) (Geobacter lovleyi).